We begin with the raw amino-acid sequence, 186 residues long: Lipoprotein signal peptidase (186 aa).

Helical transmembrane passes span 8-28, 44-64, 66-86, and 97-117; these read FFSV…FLDL, IPVL…FVFG, FQDN…FLIF, and AWGW…KFFV. Active-site residues include Asp142 and Asp164. Residues 157–177 form a helical membrane-spanning segment; it reads WPAFNVADSCVSIGIVILLFT.

This sequence belongs to the peptidase A8 family.

The protein resides in the cell inner membrane. The enzyme catalyses Release of signal peptides from bacterial membrane prolipoproteins. Hydrolyzes -Xaa-Yaa-Zaa-|-(S,diacylglyceryl)Cys-, in which Xaa is hydrophobic (preferably Leu), and Yaa (Ala or Ser) and Zaa (Gly or Ala) have small, neutral side chains.. It functions in the pathway protein modification; lipoprotein biosynthesis (signal peptide cleavage). In terms of biological role, this protein specifically catalyzes the removal of signal peptides from prolipoproteins. The protein is Lipoprotein signal peptidase of Leptospira biflexa serovar Patoc (strain Patoc 1 / ATCC 23582 / Paris).